We begin with the raw amino-acid sequence, 972 residues long: Coatomer subunit beta (972 aa).

5 HEAT repeats span residues 79–113, 133–170, 317–354, 397–434, and 481–518; these read LLYFYWEIVPKLDQDGKLRHEMILVCNAIQHDLQH, ELLEQMVPSTLACLEYRHAYVRKYAILAVLSIYKVSEH, GCLEELTLDILRVLNAEDIDVRSKALTIAMDLVTSRNI, EIAANIVSLLLDFITDLNSVAANGVIAFVKDVVELYPQ, and RQSIGEIPILQTELKNQRKSQDEDDEATEESATKQAGP. A disordered region spans residues 494 to 522; sequence LKNQRKSQDEDDEATEESATKQAGPVILP.

As to quaternary structure, oligomeric complex that consists of at least the alpha, beta, beta', gamma, delta, epsilon and zeta subunits.

It localises to the cytoplasm. The protein resides in the golgi apparatus membrane. Its subcellular location is the cytoplasmic vesicle. It is found in the COPI-coated vesicle membrane. Its function is as follows. The coatomer is a cytosolic protein complex that binds to dilysine motifs and reversibly associates with Golgi non-clathrin-coated vesicles, which further mediate biosynthetic protein transport from the ER, via the Golgi up to the trans Golgi network. Coatomer complex is required for budding from Golgi membranes, and is essential for the retrograde Golgi-to-ER transport of dilysine-tagged proteins. The polypeptide is Coatomer subunit beta (Candida glabrata (strain ATCC 2001 / BCRC 20586 / JCM 3761 / NBRC 0622 / NRRL Y-65 / CBS 138) (Yeast)).